A 1365-amino-acid chain; its full sequence is Nuclear pore complex protein Nup154 (1365 aa).

The tract at residues Met-1–Met-508 is required for binding to Nup93-1 and anchoring to the nuclear pore complex. Residues Met-508–Ala-986 are required for binding to chromatin.

The protein belongs to the non-repetitive/WGA-negative nucleoporin family. In terms of assembly, interacts (via N-terminus) with Nup93-1. Interacts with Nup35. Interacts with cup.

It is found in the nucleus. Its subcellular location is the nuclear pore complex. It localises to the chromosome. The protein resides in the nucleus membrane. The protein localises to the cytoplasm. Its function is as follows. Component of the nuclear pore complex. Has a role in the organization of the inner nuclear membrane proteins at the nuclear envelope. In germ cells, plays a role in the nuclear localization of components of the dpp signaling pathways, such as Medea and phosphorylated Mad. Binds to chromatin, and together with Nup62 and Nup93-1, contributes to karyosome morphology and chromatin organization including attachment to the nuclear envelope in oocytes and nurse cells. Has a role in female fertility including egg chamber development; in nurse cells, has a role in the organization of F-actin in subcortical and cytoplasmic actin filaments important for the transfer of cytoplasm from nurse cells to the growing oocytes. Has a role in male spermatogenesis and fertility. Has a role in germ line cell proliferation. The chain is Nuclear pore complex protein Nup154 from Drosophila melanogaster (Fruit fly).